The following is a 635-amino-acid chain: Threonine--tRNA ligase (635 aa).

One can recognise a TGS domain in the interval 1 to 61 (MIKITLKDGK…HKDSSLEILT (61 aa)). The catalytic stretch occupies residues 242 to 532 (DHRKLGKELD…LIEQYAGAFP (291 aa)). Zn(2+) is bound by residues Cys-333, His-384, and His-509.

This sequence belongs to the class-II aminoacyl-tRNA synthetase family. In terms of assembly, homodimer. The cofactor is Zn(2+).

Its subcellular location is the cytoplasm. It carries out the reaction tRNA(Thr) + L-threonine + ATP = L-threonyl-tRNA(Thr) + AMP + diphosphate + H(+). Catalyzes the attachment of threonine to tRNA(Thr) in a two-step reaction: L-threonine is first activated by ATP to form Thr-AMP and then transferred to the acceptor end of tRNA(Thr). Also edits incorrectly charged L-seryl-tRNA(Thr). This is Threonine--tRNA ligase from Clostridium botulinum (strain Kyoto / Type A2).